A 1412-amino-acid chain; its full sequence is DNA-directed RNA polymerase subunit beta' (1412 aa).

The Zn(2+) site is built by cysteine 70, cysteine 72, cysteine 85, and cysteine 88. Mg(2+)-binding residues include aspartate 460, aspartate 462, and aspartate 464. Zn(2+)-binding residues include cysteine 814, cysteine 888, cysteine 895, and cysteine 898. A disordered region spans residues 1378 to 1412 (EREAARQLANPFEDAPVTVDADAPQSDAGQEGSAE).

It belongs to the RNA polymerase beta' chain family. The RNAP catalytic core consists of 2 alpha, 1 beta, 1 beta' and 1 omega subunit. When a sigma factor is associated with the core the holoenzyme is formed, which can initiate transcription. The cofactor is Mg(2+). It depends on Zn(2+) as a cofactor.

It carries out the reaction RNA(n) + a ribonucleoside 5'-triphosphate = RNA(n+1) + diphosphate. Functionally, DNA-dependent RNA polymerase catalyzes the transcription of DNA into RNA using the four ribonucleoside triphosphates as substrates. The protein is DNA-directed RNA polymerase subunit beta' of Bordetella petrii (strain ATCC BAA-461 / DSM 12804 / CCUG 43448).